Here is a 121-residue protein sequence, read N- to C-terminus: ATP synthase epsilon chain (121 aa).

It belongs to the ATPase epsilon chain family. F-type ATPases have 2 components, CF(1) - the catalytic core - and CF(0) - the membrane proton channel. CF(1) has five subunits: alpha(3), beta(3), gamma(1), delta(1), epsilon(1). CF(0) has three main subunits: a, b and c.

The protein resides in the cell membrane. Functionally, produces ATP from ADP in the presence of a proton gradient across the membrane. This is ATP synthase epsilon chain from Mycobacterium marinum (strain ATCC BAA-535 / M).